The chain runs to 901 residues: MSILVRPPKRRLADTENLDQNHRRVLRDFGQGNSASTPINTSADYGRFDERPGSGDGSRYASPFQELSSSQGSLTRVEDSLQTRRKFPPNASIVLIGIRGTGKSSLAVMLAASYGRRVIEADLYFQRVTGRCRGVYKREHTLSEYRRQEAIVMESLLMEHQENCVIVCGPGDVERNGQMRLREYAKTHPVIHIVRDLESIQSYLKARDTEKVRRFLELSGPIYRSCSNLEFFNVSEKGISDQPSAKDSQHYTQWDAEVDQRTQTTTPFLMLKRLQRDFLRFVALATGNIPELRNQLSPFPLHMQPIESRKFTYAATVPISHLLENDVDIEELESTADAFELKIDVSAAPSARLGTESNLADSISHTVATVRRNIIVPMIYHVESSVFPDSAPLRRSDASYLELVLHGLRLGPEFVTVDLSFEDSILSQIIGTKGSSKVIGHYSQTQPPPQGWSDPEYEAIYERAKKLGCDMVRLTQPATTIDDNFAVERFRHQIKTLPGPQLPVIAYNSGPLGRQSCCFNPVLTPVIPRSLISQSGTKGLPSITIQEAQEALYSSFVLDPMQFFVFGANTTYSLSPAMHNAAFKVRGMPHIYRIHQSPTLRGINYLVENPNFGGTSVSLPYKTEVIPLLHSMSPHARAIGAVNTLIPIRNLEGSTDNALDLEKNRAGPIKGLHGDNTDWIGIGICIRRGLSPANAIRPSTTGLIIGAGGMARAGIYAMIHLGVQNIFIWNRTVANAEKLAQHYMRLNLCTLGGSGSASYTIHVLKSLQESWPANYKQPTIVVSGIPAHRIGDQPAPNFQLPPQWIESPTGGVVVDLAYKPLNTPLMRQIRSLSHRGWAALDGLDVLPEQGFAQFELFTGCRAPRRLMRTVILQEYKEEEQGEEYDQSAMRTRLENLDGQPM.

Residues 1 to 88 are sufficient for repression; that stretch reads MSILVRPPKR…DSLQTRRKFP (88 aa). Disordered regions lie at residues 26–59 and 878–901; these read LRDFGQGNSASTPINTSADYGRFDERPGSGDGSR and EEQGEEYDQSAMRTRLENLDGQPM. A compositionally biased stretch (polar residues) spans 31 to 43; that stretch reads QGNSASTPINTSA.

The protein in the N-terminal section; belongs to the shikimate kinase family. In the 2nd section; belongs to the type-I 3-dehydroquinase family. It in the C-terminal section; belongs to the shikimate dehydrogenase family. In terms of assembly, interacts with qutA; transcriptional activator of the quinate utilization pathway genes.

Multi-domain repressor protein that negatively regulates transcription of the quinate utilization pathway genes. May mediate its repressor activity by binding directly to the qutA activator protein. This Emericella nidulans (strain FGSC A4 / ATCC 38163 / CBS 112.46 / NRRL 194 / M139) (Aspergillus nidulans) protein is Quinate repressor protein (qutR).